A 602-amino-acid chain; its full sequence is Elongation factor 4 (602 aa).

The tr-type G domain maps to 7–189 (KYIRNFSIVA…AIVNKVPAPD (183 aa)). GTP is bound by residues 19–24 (DHGKST) and 136–139 (NKID).

It belongs to the TRAFAC class translation factor GTPase superfamily. Classic translation factor GTPase family. LepA subfamily.

Its subcellular location is the cell membrane. It catalyses the reaction GTP + H2O = GDP + phosphate + H(+). Its function is as follows. Required for accurate and efficient protein synthesis under certain stress conditions. May act as a fidelity factor of the translation reaction, by catalyzing a one-codon backward translocation of tRNAs on improperly translocated ribosomes. Back-translocation proceeds from a post-translocation (POST) complex to a pre-translocation (PRE) complex, thus giving elongation factor G a second chance to translocate the tRNAs correctly. Binds to ribosomes in a GTP-dependent manner. This Clostridium botulinum (strain ATCC 19397 / Type A) protein is Elongation factor 4.